A 280-amino-acid polypeptide reads, in one-letter code: Type II restriction enzyme MboI (280 aa).

Belongs to the DpnII type II restriction endonuclease family.

The catalysed reaction is Endonucleolytic cleavage of DNA to give specific double-stranded fragments with terminal 5'-phosphates.. A P subtype restriction enzyme that recognizes the double-stranded unmethylated sequence 5'-GATC-3' and cleaves before G-1. This is Type II restriction enzyme MboI (mboIR) from Moraxella bovis.